The chain runs to 109 residues: uncharacterized protein (109 aa).

Residues 10 to 109 (APFEYTLSLI…WGMAQGGPHM (100 aa)) form the HTH hxlR-type domain.

This is an uncharacterized protein from Bacillus subtilis (strain 168).